The following is a 551-amino-acid chain: E-selectin (551 aa).

Positions 1–23 (MVASWLLSTLTFALVLLIKETST) are cleaved as a signal peptide. Residues 24 to 141 (WTYHFSAENM…CSKKKLALCY (118 aa)) enclose the C-type lectin domain. The Extracellular segment spans residues 24–495 (WTYHFSAENM…CEEPIASNVP (472 aa)). N-linked (GlcNAc...) asparagine glycans are attached at residues N32 and N45. 17 disulfides stabilise this stretch: C42–C140, C113–C132, C145–C156, C150–C165, C167–C176, C182–C226, C195–C208, C212–C239, C244–C288, C257–C270, C274–C301, C306–C351, C337–C364, C369–C414, C400–C427, C432–C473, and C459–C486. The Ca(2+) site is built by E103, N105, and E111. A carbohydrate is bound by residues 103–111 (EPNNKQNNE), 115–120 (EIYIKR), and 128–130 (NDE). 2 residues coordinate Ca(2+): N128 and D129. Positions 142–177 (TAACTEASCSGHGECIETINNYSCKCYPGFSGLKCE) constitute an EGF-like domain. Residue N162 is glycosylated (N-linked (GlcNAc...) asparagine). 5 consecutive Sushi domains span residues 180–241 (VTCE…TCKV), 242–303 (VECD…TCKA), 305–366 (SCDT…VCEA), 368–429 (KCDP…SCQV), and 430–488 (VQCP…TCEE). N194, N201, and N205 each carry an N-linked (GlcNAc...) asparagine glycan. The N-linked (GlcNAc...) asparagine glycan is linked to N267. 3 N-linked (GlcNAc...) asparagine glycosylation sites follow: N314, N321, and N334. N442 and N466 each carry an N-linked (GlcNAc...) asparagine glycan. Residues 496-517 (LAVGLSVSGTSFLTLTSFLLWF) traverse the membrane as a helical segment. The Cytoplasmic segment spans residues 518 to 551 (LKYFRKKAKKFVPASSRYVGLEAHGNCQVPSHLI).

The protein belongs to the selectin/LECAM family. As to quaternary structure, interacts with SELPLG/PSGL1 and PODXL2 through the sialyl Lewis X epitope. SELPLG sulfation appears not to be required for this interaction.

The protein localises to the cell membrane. Its function is as follows. Cell-surface glycoprotein having a role in immunoadhesion. Mediates in the adhesion of blood neutrophils in cytokine-activated endothelium through interaction with SELPLG/PSGL1. May have a role in capillary morphogenesis. The sequence is that of E-selectin (SELE) from Oryctolagus cuniculus (Rabbit).